Here is a 225-residue protein sequence, read N- to C-terminus: 2-C-methyl-D-erythritol 4-phosphate cytidylyltransferase (225 aa).

The protein belongs to the IspD/TarI cytidylyltransferase family. IspD subfamily.

The catalysed reaction is 2-C-methyl-D-erythritol 4-phosphate + CTP + H(+) = 4-CDP-2-C-methyl-D-erythritol + diphosphate. It functions in the pathway isoprenoid biosynthesis; isopentenyl diphosphate biosynthesis via DXP pathway; isopentenyl diphosphate from 1-deoxy-D-xylulose 5-phosphate: step 2/6. Catalyzes the formation of 4-diphosphocytidyl-2-C-methyl-D-erythritol from CTP and 2-C-methyl-D-erythritol 4-phosphate (MEP). The polypeptide is 2-C-methyl-D-erythritol 4-phosphate cytidylyltransferase (Cereibacter sphaeroides (strain KD131 / KCTC 12085) (Rhodobacter sphaeroides)).